The sequence spans 334 residues: Fructose-1,6-bisphosphatase class 1 (334 aa).

Positions 93, 117, 119, and 120 each coordinate Mg(2+). Substrate-binding positions include 120–123, N213, Y244, and K274; that span reads DGSS. E280 lines the Mg(2+) pocket.

It belongs to the FBPase class 1 family. In terms of assembly, homotetramer. Requires Mg(2+) as cofactor.

The protein localises to the cytoplasm. It carries out the reaction beta-D-fructose 1,6-bisphosphate + H2O = beta-D-fructose 6-phosphate + phosphate. It participates in carbohydrate biosynthesis; gluconeogenesis. The polypeptide is Fructose-1,6-bisphosphatase class 1 (Flavobacterium johnsoniae (strain ATCC 17061 / DSM 2064 / JCM 8514 / BCRC 14874 / CCUG 350202 / NBRC 14942 / NCIMB 11054 / UW101) (Cytophaga johnsonae)).